Here is a 1026-residue protein sequence, read N- to C-terminus: Multidrug resistance protein MdtC (1026 aa).

The next 11 helical transmembrane spans lie at 15 to 35 (ILIA…LPVA), 333 to 353 (EVEE…FLFL), 360 to 380 (LIPA…MYLC), 387 to 407 (LSLM…IVVL), 431 to 451 (VGFT…PLLL), 463 to 483 (FAVT…TLTP), 528 to 548 (LVGV…IAIP), 853 to 873 (LILI…LYES), 897 to 917 (LFNA…IGIV), 953 to 973 (PIMM…LSDG), and 984 to 1004 (ITIV…TPVV).

It belongs to the resistance-nodulation-cell division (RND) (TC 2.A.6) family. MdtC subfamily. As to quaternary structure, part of a tripartite efflux system composed of MdtA, MdtB and MdtC. MdtC forms a heteromultimer with MdtB.

It localises to the cell inner membrane. The chain is Multidrug resistance protein MdtC from Salmonella paratyphi B (strain ATCC BAA-1250 / SPB7).